Consider the following 224-residue polypeptide: Large ribosomal subunit protein uL1c (224 aa).

It belongs to the universal ribosomal protein uL1 family. In terms of assembly, part of the 50S ribosomal subunit.

Its subcellular location is the plastid. It localises to the chloroplast. Its function is as follows. Binds directly to 23S rRNA. Might be involved in E site tRNA release (Potential). The protein is Large ribosomal subunit protein uL1c (rpl1) of Cyanidioschyzon merolae (strain NIES-3377 / 10D) (Unicellular red alga).